Reading from the N-terminus, the 379-residue chain is Alkanesulfonate monooxygenase (379 aa).

The protein belongs to the SsuD family.

It carries out the reaction an alkanesulfonate + FMNH2 + O2 = an aldehyde + FMN + sulfite + H2O + 2 H(+). Catalyzes the desulfonation of aliphatic sulfonates. The polypeptide is Alkanesulfonate monooxygenase (Pseudomonas syringae pv. syringae (strain B728a)).